Consider the following 298-residue polypeptide: Short-chain dehydrogenase/reductase prx6 (298 aa).

NADP(+) is bound by residues isoleucine 27, aspartate 70, asparagine 97, tyrosine 174, lysine 178, valine 208, and threonine 210. The active-site Proton acceptor is tyrosine 174. The active-site Lowers pKa of active site Tyr is lysine 178.

It belongs to the short-chain dehydrogenases/reductases (SDR) family.

It functions in the pathway sesquiterpene biosynthesis. Its function is as follows. Short-chain dehydrogenase/reductase; part of the gene cluster that mediates the biosynthesis of PR-toxin, a bicyclic sesquiterpene belonging to the eremophilane class and acting as a mycotoxin. The first step of the pathway is catalyzed by the aristolochene synthase which performs the cyclization of trans,trans-farnesyl diphosphate (FPP) to the bicyclic sesquiterpene aristolochene. Following the formation of aristolochene, the non-oxygenated aristolochene is converted to the trioxygenated intermediate eremofortin B, via 7-epi-neopetasone. This conversion appears to involve three enzymes, a hydroxysterol oxidase-like enzyme, the quinone-oxidase prx3 that forms the quinone-type-structure in the bicyclic nucleus of aristolochene with the C8-oxo group and the C-3 hydroxyl group, and the P450 monooxygenase prx9 that introduces the epoxide at the double bond between carbons 1 and 2. No monoxy or dioxy-intermediates have been reported to be released to the broth, so these three early oxidative reactions may be coupled together. Eremofortin B is further oxidized by another P450 monooxygenase, that introduces a second epoxide between carbons 7 and 11 prior to acetylation to eremofortin A by the acetyltransferase prx11. The second epoxidation may be performed by a second P450 monooxygenase. After the acetylation step, eremofortin A is converted to eremofortin C and then to PR-toxin. First the conversion of eremofortin A to eremofortin C proceeds by oxidation of the side chain of the molecule at C-12 and is catalyzed by the short-chain oxidoreductase prx1. The cytochrome P450 monooxygenase prx8 also plays a role in this step. The primary alcohol formed at C-12 is finally oxidized by the short-chain alcohol dehydrogenase prx4 that forms PR-toxin. This Penicillium rubens (strain ATCC 28089 / DSM 1075 / NRRL 1951 / Wisconsin 54-1255) (Penicillium chrysogenum) protein is Short-chain dehydrogenase/reductase prx6.